We begin with the raw amino-acid sequence, 184 residues long: MKNVTDSFVSLGHWPSAGSFGFNTDILATNLINLSVVLGVLIFFGKGVLSDLLDNRKQRILNTIRNSEELREGAIEQLEKARARLRKVEIEADQFRVNGYSEIEREKLNLIDSTYKTLEQLENYKNETINFEQQKASNQVRQRVFQQALQGALGTLNSCLNSELHLRTISANIGILGAMKEITD.

Residues 27–49 (LATNLINLSVVLGVLIFFGKGVL) traverse the membrane as a helical segment.

This sequence belongs to the ATPase B chain family. As to quaternary structure, F-type ATPases have 2 components, F(1) - the catalytic core - and F(0) - the membrane proton channel. F(1) has five subunits: alpha(3), beta(3), gamma(1), delta(1), epsilon(1). F(0) has four main subunits: a(1), b(1), b'(1) and c(10-14). The alpha and beta chains form an alternating ring which encloses part of the gamma chain. F(1) is attached to F(0) by a central stalk formed by the gamma and epsilon chains, while a peripheral stalk is formed by the delta, b and b' chains.

The protein resides in the plastid. Its subcellular location is the chloroplast thylakoid membrane. Functionally, f(1)F(0) ATP synthase produces ATP from ADP in the presence of a proton or sodium gradient. F-type ATPases consist of two structural domains, F(1) containing the extramembraneous catalytic core and F(0) containing the membrane proton channel, linked together by a central stalk and a peripheral stalk. During catalysis, ATP synthesis in the catalytic domain of F(1) is coupled via a rotary mechanism of the central stalk subunits to proton translocation. In terms of biological role, component of the F(0) channel, it forms part of the peripheral stalk, linking F(1) to F(0). This chain is ATP synthase subunit b, chloroplastic, found in Lactuca sativa (Garden lettuce).